The sequence spans 507 residues: Wax ester synthase/diacylglycerol acyltransferase 5 (507 aa).

Residues 1–211 are Cytoplasmic-facing; it reads MEIKIRRRRG…LKTSSRCYSR (211 aa). H161 serves as the catalytic Proton acceptor. The chain crosses the membrane as a helical span at residues 212–232; that stretch reads FFWLVMVLWSAALLVLNTVCD. The Lumenal portion of the chain corresponds to 233–507; it reads ALEFIATALF…VVVQERTSTQ (275 aa). N314 and N421 each carry an N-linked (GlcNAc...) asparagine glycan.

It in the N-terminal section; belongs to the long-chain O-acyltransferase family. As to expression, mostly expressed in flowers and siliques.

The protein resides in the cell membrane. Its subcellular location is the endoplasmic reticulum membrane. The enzyme catalyses a long chain fatty alcohol + a fatty acyl-CoA = a wax ester + CoA. The catalysed reaction is an acyl-CoA + a 1,2-diacyl-sn-glycerol = a triacyl-sn-glycerol + CoA. It functions in the pathway glycerolipid metabolism; triacylglycerol biosynthesis. It participates in lipid metabolism. Its function is as follows. Bifunctional wax ester synthase/diacylglycerol acyltransferase. Involved in cuticular wax biosynthesis. The polypeptide is Wax ester synthase/diacylglycerol acyltransferase 5 (Arabidopsis thaliana (Mouse-ear cress)).